Here is a 290-residue protein sequence, read N- to C-terminus: Pyridoxal kinase PdxY (290 aa).

Substrate contacts are provided by residues S9 and 44-45 (TQ). ATP contacts are provided by D112, V144, E149, and K182. D221 lines the substrate pocket.

It belongs to the pyridoxine kinase family. PdxY subfamily. As to quaternary structure, homodimer. Requires Mg(2+) as cofactor.

It carries out the reaction pyridoxal + ATP = pyridoxal 5'-phosphate + ADP + H(+). It participates in cofactor metabolism; pyridoxal 5'-phosphate salvage; pyridoxal 5'-phosphate from pyridoxal: step 1/1. Its function is as follows. Pyridoxal kinase involved in the salvage pathway of pyridoxal 5'-phosphate (PLP). Catalyzes the phosphorylation of pyridoxal to PLP. This Vibrio vulnificus (strain CMCP6) protein is Pyridoxal kinase PdxY.